The primary structure comprises 291 residues: Undecaprenyl-diphosphatase (291 aa).

8 helical membrane-spanning segments follow: residues 1–21, 48–68, 100–120, 124–144, 160–180, 201–221, 230–250, and 270–290; these read MIII…LTEF, SAFT…AWVF, LHVL…DDFI, LFSV…MIIA, INYV…WPGF, SDFT…LSLV, AHIP…LIAI, and IVLV…QGIS.

Belongs to the UppP family.

The protein localises to the cell membrane. The catalysed reaction is di-trans,octa-cis-undecaprenyl diphosphate + H2O = di-trans,octa-cis-undecaprenyl phosphate + phosphate + H(+). Catalyzes the dephosphorylation of undecaprenyl diphosphate (UPP). Confers resistance to bacitracin. The protein is Undecaprenyl-diphosphatase of Staphylococcus haemolyticus (strain JCSC1435).